The chain runs to 539 residues: CTP synthase (539 aa).

Residues 1 to 267 (MTKYIFVTGG…DQKVCDFLHL (267 aa)) are amidoligase domain. A CTP-binding site is contributed by serine 13. Serine 13 is a UTP binding site. 14–19 (SLGKGI) is an ATP binding site. Tyrosine 54 serves as a coordination point for L-glutamine. Aspartate 71 contributes to the ATP binding site. Mg(2+) contacts are provided by aspartate 71 and glutamate 141. Residues 148 to 150 (DIE), 188 to 193 (KTKPTQ), and lysine 224 contribute to the CTP site. UTP is bound by residues 188 to 193 (KTKPTQ) and lysine 224. Residues 294-537 (KITLVGKYVE…IGAASGLPAQ (244 aa)) enclose the Glutamine amidotransferase type-1 domain. Residue glycine 356 coordinates L-glutamine. The active-site Nucleophile; for glutamine hydrolysis is cysteine 383. L-glutamine contacts are provided by residues 384-387 (LGMQ), glutamate 407, and arginine 465. Residues histidine 510 and glutamate 512 contribute to the active site.

This sequence belongs to the CTP synthase family. As to quaternary structure, homotetramer.

The enzyme catalyses UTP + L-glutamine + ATP + H2O = CTP + L-glutamate + ADP + phosphate + 2 H(+). It catalyses the reaction L-glutamine + H2O = L-glutamate + NH4(+). It carries out the reaction UTP + NH4(+) + ATP = CTP + ADP + phosphate + 2 H(+). It participates in pyrimidine metabolism; CTP biosynthesis via de novo pathway; CTP from UDP: step 2/2. Its activity is regulated as follows. Allosterically activated by GTP, when glutamine is the substrate; GTP has no effect on the reaction when ammonia is the substrate. The allosteric effector GTP functions by stabilizing the protein conformation that binds the tetrahedral intermediate(s) formed during glutamine hydrolysis. Inhibited by the product CTP, via allosteric rather than competitive inhibition. In terms of biological role, catalyzes the ATP-dependent amination of UTP to CTP with either L-glutamine or ammonia as the source of nitrogen. Regulates intracellular CTP levels through interactions with the four ribonucleotide triphosphates. In Lactobacillus acidophilus (strain ATCC 700396 / NCK56 / N2 / NCFM), this protein is CTP synthase.